Here is a 116-residue protein sequence, read N- to C-terminus: Large ribosomal subunit protein uL18 (116 aa).

The protein belongs to the universal ribosomal protein uL18 family. Part of the 50S ribosomal subunit; part of the 5S rRNA/L5/L18/L25 subcomplex. Contacts the 5S and 23S rRNAs.

This is one of the proteins that bind and probably mediate the attachment of the 5S RNA into the large ribosomal subunit, where it forms part of the central protuberance. This is Large ribosomal subunit protein uL18 from Shewanella sediminis (strain HAW-EB3).